Reading from the N-terminus, the 362-residue chain is Probable prephenate dehydrogenase NovF (362 aa).

The Prephenate/arogenate dehydrogenase domain occupies 2 to 283 (RTAVIIGTGM…GIDGSNRVPG (282 aa)).

Belongs to the prephenate/arogenate dehydrogenase family.

The catalysed reaction is prephenate + NAD(+) = 3-(4-hydroxyphenyl)pyruvate + CO2 + NADH. It participates in antibiotic biosynthesis; novobiocin biosynthesis. Its function is as follows. Probable prephenate dehydrogenase that produces 4-hydroxyphenylpyruvate (4HPP) in the novobiocin biosynthesis pathway. Novobiocin is an aminocoumarin family antibiotic that targets bacterial DNA gyrases. The protein is Probable prephenate dehydrogenase NovF (novF) of Streptomyces niveus (Streptomyces spheroides).